Consider the following 230-residue polypeptide: Ribonuclease HII (230 aa).

Residues 1 to 224 (MIIIGIDEAG…CKRILDKSKQ (224 aa)) form the RNase H type-2 domain. 3 residues coordinate a divalent metal cation: D7, E8, and D112.

Belongs to the RNase HII family. Requires Mn(2+) as cofactor. Mg(2+) is required as a cofactor.

The protein localises to the cytoplasm. It catalyses the reaction Endonucleolytic cleavage to 5'-phosphomonoester.. Its function is as follows. Endonuclease that specifically degrades the RNA of RNA-DNA hybrids. This is Ribonuclease HII (rnhB) from Methanocaldococcus jannaschii (strain ATCC 43067 / DSM 2661 / JAL-1 / JCM 10045 / NBRC 100440) (Methanococcus jannaschii).